The primary structure comprises 233 residues: Large ribosomal subunit protein uL1 (233 aa).

It belongs to the universal ribosomal protein uL1 family. As to quaternary structure, part of the 50S ribosomal subunit.

Its function is as follows. Binds directly to 23S rRNA. The L1 stalk is quite mobile in the ribosome, and is involved in E site tRNA release. Functionally, protein L1 is also a translational repressor protein, it controls the translation of the L11 operon by binding to its mRNA. The protein is Large ribosomal subunit protein uL1 of Rhizobium etli (strain ATCC 51251 / DSM 11541 / JCM 21823 / NBRC 15573 / CFN 42).